The chain runs to 450 residues: Protein W (450 aa).

Positions 53–92 are disordered; that stretch reads SGESEQVEGGMSKDDGDVERRNLEDLSSTSPTDGTIGKRV. The span at 63–76 shows a compositional bias: basic and acidic residues; sequence MSKDDGDVERRNLE. Serine 257 bears the Phosphoserine; by host mark. The segment at 265–324 is disordered; sequence ISPEDEEPSSVGGKPNESIGRTIEGQSIRDNLQAKDNKSTDVPGAGPKDSAVKEEPPQKR. A Phosphoserine; by host modification is found at serine 350. Disordered stretches follow at residues 384–403 and 429–450; these read VQTA…RGIP and PGMF…RMSN. Residues 438-450 show a composition bias toward basic residues; the sequence is TKKARVSMRRMSN. A Nuclear localization signal motif is present at residues 439–442; sequence KKAR.

In terms of assembly, interacts with host STAT1.

The protein resides in the host nucleus. Functionally, prevent the establishment of cellular antiviral state by blocking the interferon-alpha/beta (IFN-alpha/beta). Interacts with host STAT1 protein in the nucleus, blocking it's phosphorylation by IFN-alpha/beta. Also blocks antiviral state induced by Toll-like receptor 3/TLR3 binding to dsRNA. The sequence is that of Protein W (P/V/C) from Cynopterus brachyotis (Lesser short-nosed fruit bat).